The chain runs to 246 residues: Exosome complex component Rrp41 (246 aa).

It belongs to the RNase PH family. Rrp41 subfamily. In terms of assembly, component of the archaeal exosome complex. Forms a hexameric ring-like arrangement composed of 3 Rrp41-Rrp42 heterodimers. The hexameric ring associates with a trimer of Rrp4 and/or Csl4 subunits.

It localises to the cytoplasm. Catalytic component of the exosome, which is a complex involved in RNA degradation. Has 3'-&gt;5' exoribonuclease activity. Can also synthesize heteromeric RNA-tails. The protein is Exosome complex component Rrp41 of Pyrobaculum calidifontis (strain DSM 21063 / JCM 11548 / VA1).